A 555-amino-acid chain; its full sequence is Branched-chain-amino-acid aminotransferase-like protein 1 (555 aa).

This sequence belongs to the class-IV pyridoxal-phosphate-dependent aminotransferase family.

In Arabidopsis thaliana (Mouse-ear cress), this protein is Branched-chain-amino-acid aminotransferase-like protein 1.